Reading from the N-terminus, the 969-residue chain is Vacuolar membrane protease (969 aa).

The Cytoplasmic segment spans residues 1 to 12 (MTRVNSIIGFRP). A helical membrane pass occupies residues 13–33 (IPVTLLTVITYVSLFSALLFI). The Vacuolar portion of the chain corresponds to 34 to 381 (DRQPPAVAKK…RAFSVLHLHT (348 aa)). A glycan (N-linked (GlcNAc...) asparagine) is linked at N125. Residues H166 and D178 each contribute to the Zn(2+) site. E216 functions as the Proton acceptor in the catalytic mechanism. Residues E217, E242, and H315 each coordinate Zn(2+). The N-linked (GlcNAc...) asparagine glycan is linked to N355. A helical transmembrane segment spans residues 382 to 402 (IFAFTITLIVVPFVVVLVAMW). At 403–438 (ALGHFDKLYFFSNTAYIPPPPEHSIASRTTQGWRGV) the chain is on the cytoplasmic side. The helical transmembrane segment at 439-459 (LRFPVAFVAASAGVVGMAFLI) threads the bilayer. Over 460 to 469 (NKINPMVVYA) the chain is Vacuolar. Residues 470-490 (SQYTVWTCFLSTWWIIAWVIL) traverse the membrane as a helical segment. Residues 491-505 (RGADAVRPTALARGY) are Cytoplasmic-facing. Residues 506-526 (GFLEQWLLWLVAMIGVAISIG) form a helical membrane-spanning segment. Topologically, residues 527-531 (KSHLG) are vacuolar. The helical transmembrane segment at 532–552 (SGYWVLVFYSGFFTSAFISLL) threads the bilayer. Residues 553–662 (EMAALQKKSE…WSKDLPSWTW (110 aa)) lie on the Cytoplasmic side of the membrane. The segment at 571 to 629 (DQAYPPEEHSQTGASGNISNRAANDDDDAGEHATEETPLFRGPNRPLSFAPHRNPRYDN) is disordered. Over residues 581-592 (QTGASGNISNRA) the composition is skewed to polar residues. A helical membrane pass occupies residues 663 to 683 (ILQFLATVPLQLVLAGSVALL). The Vacuolar portion of the chain corresponds to 684–698 (LGNALAQTGADGSDM). Residues 699–719 (LTVLLGFGVFSIILLLPVAPF) traverse the membrane as a helical segment. The Cytoplasmic portion of the chain corresponds to 720-727 (LHRITYHV). Residues 728–748 (TLFIFVIFVGTFIYNLAAPPF) traverse the membrane as a helical segment. Residues 749–969 (SPNARLKVYF…LVEGSVPFMI (221 aa)) are Vacuolar-facing. The N-linked (GlcNAc...) asparagine glycan is linked to N840.

Belongs to the peptidase M28 family. Requires Zn(2+) as cofactor.

The protein resides in the vacuole membrane. Its function is as follows. May be involved in vacuolar sorting and osmoregulation. This chain is Vacuolar membrane protease, found in Tuber melanosporum (strain Mel28) (Perigord black truffle).